A 651-amino-acid polypeptide reads, in one-letter code: Coiled-coil domain-containing protein 81 (651 aa).

Residues Leu-194–Gln-314 form a disordered region. Position 206 is a phosphoserine (Ser-206). Basic and acidic residues-rich tracts occupy residues Arg-212–Pro-222 and Gly-232–Gly-250. A compositionally biased stretch (polar residues) spans Ser-265–Ser-275. Phosphoserine is present on residues Ser-273, Ser-275, Ser-294, and Ser-416. Coiled coils occupy residues Ser-428–Ala-465 and Lys-539–Ala-566.

The protein localises to the cytoplasm. The protein resides in the cytoskeleton. It is found in the microtubule organizing center. Its subcellular location is the centrosome. In Rattus norvegicus (Rat), this protein is Coiled-coil domain-containing protein 81 (Ccdc81).